A 317-amino-acid polypeptide reads, in one-letter code: HTH-type transcriptional regulator MetR (317 aa).

Residues 1 to 59 (MIEVKHLKTLQALRNCGSLAAAAATLHQTQSALSHQFSDLEQRLGFRLFVRKSQPLRFT) enclose the HTH lysR-type domain. Residues 19–38 (LAAAAATLHQTQSALSHQFS) constitute a DNA-binding region (H-T-H motif).

Belongs to the LysR transcriptional regulatory family.

The protein localises to the cytoplasm. Control of the last step in methionine biosynthesis; MetR is a positive activator of the metA, metE and metH genes. It is also a negative regulator of its own expression. This is HTH-type transcriptional regulator MetR (metR) from Escherichia coli O157:H7.